Reading from the N-terminus, the 213-residue chain is Orotate phosphoribosyltransferase (213 aa).

A 5-phospho-alpha-D-ribose 1-diphosphate-binding site is contributed by Lys26. 34–35 (FF) lines the orotate pocket. 5-phospho-alpha-D-ribose 1-diphosphate-binding positions include 72-73 (YK), Arg99, Lys100, Lys103, His105, and 124-132 (DDVITAGTA). Orotate is bound by residues Thr128 and Arg156.

This sequence belongs to the purine/pyrimidine phosphoribosyltransferase family. PyrE subfamily. Homodimer. The cofactor is Mg(2+).

It catalyses the reaction orotidine 5'-phosphate + diphosphate = orotate + 5-phospho-alpha-D-ribose 1-diphosphate. The protein operates within pyrimidine metabolism; UMP biosynthesis via de novo pathway; UMP from orotate: step 1/2. Catalyzes the transfer of a ribosyl phosphate group from 5-phosphoribose 1-diphosphate to orotate, leading to the formation of orotidine monophosphate (OMP). The sequence is that of Orotate phosphoribosyltransferase from Photobacterium profundum (strain SS9).